A 1253-amino-acid polypeptide reads, in one-letter code: Cytoplasmic FMR1-interacting protein 2 (1253 aa).

The protein belongs to the CYFIP family.

It is found in the cytoplasm. Its function is as follows. Involved in T-cell adhesion and p53-dependent induction of apoptosis. Does not bind RNA. The chain is Cytoplasmic FMR1-interacting protein 2 (cyfip2) from Xenopus laevis (African clawed frog).